The primary structure comprises 207 residues: MTEAASEGTESFAFGAVVERRDELDGRPWISYPVRVVADTPELVAVHLSHGTRLTFGDDPFSWGPHPWQLFGDRWQSAGILQLHRPGRGHSVWVLRDADTGAFREWYVNVEAPWRRTPTGFSTLDHEIDLVVPADSRTLRWKDVEKFEERARIGHFSPEEATAIRAEAADVAREIAAGEQWWDTRWSRWEPPAGWNALLQSFETEGS.

4 residues coordinate CDP: Trp68, Arg74, Gln76, and Ser77. A divalent metal cation-binding residues include Asn109, Asp125, Glu127, and Asp129. A CDP-binding site is contributed by Lys142. The Proton donor role is filled by Lys142. Asp143 contacts a divalent metal cation.

The protein belongs to the FomD family. The cofactor is Mn(2+). Requires Co(2+) as cofactor.

The enzyme catalyses cytidine 5'-({hydroxy[(S)-2-hydroxypropyl]phosphonoyl}phosphate) + H2O = (S)-2-hydroxypropylphosphonate + CMP + H(+). It functions in the pathway antibiotic biosynthesis; fosfomycin biosynthesis. Its activity is regulated as follows. Hydrolysis of (S)-HPP-CMP is inhibited by CDP. In terms of biological role, involved in fosfomycin biosynthesis. Catalyzes the hydrolysis of cytidylyl (S)-2-hydroxypropylphosphonate ((S)-HPP-CMP) to give (S)-2-hydroxypropylphosphonate ((S)-HPP) and CMP. Can also hydrolyze (R)-HPP-CMP and cytidylyl 2-hydroxyethylphosphonate (HEP-CMP), which is a biosynthetic intermediate before C-methylation, but the catalytic efficiency is much higher with (S)-HPP-CMP. This is Cytidylyl-2-hydroxypropylphosphonate hydrolase from Streptomyces fradiae (Streptomyces roseoflavus).